We begin with the raw amino-acid sequence, 331 residues long: Biotin synthase (331 aa).

In terms of domain architecture, Radical SAM core spans 52–277; the sequence is PDVEVEGIIS…RTMLRFAGGR (226 aa). C67, C71, and C74 together coordinate [4Fe-4S] cluster. Positions 110, 143, 202, and 272 each coordinate [2Fe-2S] cluster.

This sequence belongs to the radical SAM superfamily. Biotin synthase family. Homodimer. It depends on [4Fe-4S] cluster as a cofactor. Requires [2Fe-2S] cluster as cofactor.

The enzyme catalyses (4R,5S)-dethiobiotin + (sulfur carrier)-SH + 2 reduced [2Fe-2S]-[ferredoxin] + 2 S-adenosyl-L-methionine = (sulfur carrier)-H + biotin + 2 5'-deoxyadenosine + 2 L-methionine + 2 oxidized [2Fe-2S]-[ferredoxin]. Its pathway is cofactor biosynthesis; biotin biosynthesis; biotin from 7,8-diaminononanoate: step 2/2. In terms of biological role, catalyzes the conversion of dethiobiotin (DTB) to biotin by the insertion of a sulfur atom into dethiobiotin via a radical-based mechanism. The protein is Biotin synthase of Mycolicibacterium gilvum (strain PYR-GCK) (Mycobacterium gilvum (strain PYR-GCK)).